The following is a 65-amino-acid chain: Small vasohibin-binding protein (65 aa).

Over residues 1–22 (MEPACRKDKQKQQTPTRGDRTK) the composition is skewed to basic and acidic residues. Residues 1 to 30 (MEPACRKDKQKQQTPTRGDRTKQKTAQQEL) are disordered. Positions 31-51 (KQRQRAEIYALNKVMTELEQQ) form a coiled coil.

This sequence belongs to the SVBP family.

Its subcellular location is the cytoplasm. The protein localises to the secreted. It localises to the cytoskeleton. Enhances the tyrosine carboxypeptidase activity of vash1 and vash2, thereby promoting the removal of the C-terminal tyrosine residue of alpha-tubulin. Also required to enhance the solubility and secretion of vash1 and vash2. May play a role in axon and excitatory synapse formation. This Danio rerio (Zebrafish) protein is Small vasohibin-binding protein.